A 144-amino-acid polypeptide reads, in one-letter code: 3-hydroxyacyl-[acyl-carrier-protein] dehydratase FabZ (144 aa).

The active site involves histidine 51.

The protein belongs to the thioester dehydratase family. FabZ subfamily.

Its subcellular location is the cytoplasm. It carries out the reaction a (3R)-hydroxyacyl-[ACP] = a (2E)-enoyl-[ACP] + H2O. Functionally, involved in unsaturated fatty acids biosynthesis. Catalyzes the dehydration of short chain beta-hydroxyacyl-ACPs and long chain saturated and unsaturated beta-hydroxyacyl-ACPs. The sequence is that of 3-hydroxyacyl-[acyl-carrier-protein] dehydratase FabZ from Clostridium botulinum (strain Okra / Type B1).